We begin with the raw amino-acid sequence, 445 residues long: Trigger factor (445 aa).

The 86-residue stretch at 162-247 folds into the PPIase FKBP-type domain; the sequence is GDQVTIDAIG…IKAVHTAEPT (86 aa).

The protein belongs to the FKBP-type PPIase family. Tig subfamily.

Its subcellular location is the cytoplasm. It catalyses the reaction [protein]-peptidylproline (omega=180) = [protein]-peptidylproline (omega=0). In terms of biological role, involved in protein export. Acts as a chaperone by maintaining the newly synthesized protein in an open conformation. Functions as a peptidyl-prolyl cis-trans isomerase. In Rickettsia africae (strain ESF-5), this protein is Trigger factor.